The primary structure comprises 520 residues: GMP synthase [glutamine-hydrolyzing] (520 aa).

One can recognise a Glutamine amidotransferase type-1 domain in the interval 9 to 202 (KILILDFGSQ…VRKICGCSGQ (194 aa)). The Nucleophile role is filled by Cys-86. Residues His-176 and Glu-178 contribute to the active site. In terms of domain architecture, GMPS ATP-PPase spans 203–395 (WTPGHIIDDA…LGLPHQMVWR (193 aa)). 230–236 (SGGVDSS) lines the ATP pocket.

In terms of assembly, homodimer.

It catalyses the reaction XMP + L-glutamine + ATP + H2O = GMP + L-glutamate + AMP + diphosphate + 2 H(+). It participates in purine metabolism; GMP biosynthesis; GMP from XMP (L-Gln route): step 1/1. In terms of biological role, catalyzes the synthesis of GMP from XMP. In Geobacter metallireducens (strain ATCC 53774 / DSM 7210 / GS-15), this protein is GMP synthase [glutamine-hydrolyzing].